Consider the following 685-residue polypeptide: Probable transketolase (685 aa).

Position 32 (His32) interacts with substrate. Residues His72 and 121 to 123 each bind thiamine diphosphate; that span reads GPL. Asp162 contributes to the Mg(2+) binding site. Thiamine diphosphate contacts are provided by Gly163 and Asn192. Mg(2+)-binding residues include Asn192 and Ile194. His268, Arg363, and Ser390 together coordinate substrate. His268 contributes to the thiamine diphosphate binding site. Thiamine diphosphate is bound by residues Glu422 and Phe448. Glu422 functions as the Proton donor in the catalytic mechanism. His472, Asp480, and Arg531 together coordinate substrate.

It belongs to the transketolase family. Homodimer. Requires Mg(2+) as cofactor. The cofactor is Ca(2+). Mn(2+) serves as cofactor. It depends on Co(2+) as a cofactor. Thiamine diphosphate is required as a cofactor.

The catalysed reaction is D-sedoheptulose 7-phosphate + D-glyceraldehyde 3-phosphate = aldehydo-D-ribose 5-phosphate + D-xylulose 5-phosphate. Catalyzes the transfer of a two-carbon ketol group from a ketose donor to an aldose acceptor, via a covalent intermediate with the cofactor thiamine pyrophosphate. The chain is Probable transketolase from Schizosaccharomyces pombe (strain 972 / ATCC 24843) (Fission yeast).